The following is a 617-amino-acid chain: uncharacterized protein (617 aa).

The 102-residue stretch at 33–134 folds into the B12-binding N-terminal domain; the sequence is TEDDFRGEKF…FXNATKQKGS (102 aa). Residues E84, 146–150, H149, S194, T198, and A251 contribute to the methylcob(III)alamin site; that span reads GDVHD. The region spanning 136-272 is the B12-binding domain; that stretch reads NGKVVIATVK…NPEGRAALWE (137 aa). The AdoMet activation domain maps to 288–617; the sequence is SKPLRKQLSI…MMKWLGVAMK (330 aa). Residues D337, R528, and 583–584 each bind S-adenosyl-L-methionine; that span reads YF.

The protein belongs to the vitamin-B12 dependent methionine synthase family.

This is an uncharacterized protein from Haemophilus influenzae (strain ATCC 51907 / DSM 11121 / KW20 / Rd).